The chain runs to 95 residues: Aspartyl/glutamyl-tRNA(Asn/Gln) amidotransferase subunit C (95 aa).

The protein belongs to the GatC family. As to quaternary structure, heterotrimer of A, B and C subunits.

It carries out the reaction L-glutamyl-tRNA(Gln) + L-glutamine + ATP + H2O = L-glutaminyl-tRNA(Gln) + L-glutamate + ADP + phosphate + H(+). The catalysed reaction is L-aspartyl-tRNA(Asn) + L-glutamine + ATP + H2O = L-asparaginyl-tRNA(Asn) + L-glutamate + ADP + phosphate + 2 H(+). Functionally, allows the formation of correctly charged Asn-tRNA(Asn) or Gln-tRNA(Gln) through the transamidation of misacylated Asp-tRNA(Asn) or Glu-tRNA(Gln) in organisms which lack either or both of asparaginyl-tRNA or glutaminyl-tRNA synthetases. The reaction takes place in the presence of glutamine and ATP through an activated phospho-Asp-tRNA(Asn) or phospho-Glu-tRNA(Gln). The polypeptide is Aspartyl/glutamyl-tRNA(Asn/Gln) amidotransferase subunit C (Bradyrhizobium sp. (strain BTAi1 / ATCC BAA-1182)).